We begin with the raw amino-acid sequence, 70 residues long: Small ribosomal subunit protein bS21A (70 aa).

Belongs to the bacterial ribosomal protein bS21 family.

The chain is Small ribosomal subunit protein bS21A from Burkholderia orbicola (strain AU 1054).